The following is a 111-amino-acid chain: Large ribosomal subunit protein uL22 (111 aa).

Belongs to the universal ribosomal protein uL22 family. As to quaternary structure, part of the 50S ribosomal subunit.

In terms of biological role, this protein binds specifically to 23S rRNA; its binding is stimulated by other ribosomal proteins, e.g. L4, L17, and L20. It is important during the early stages of 50S assembly. It makes multiple contacts with different domains of the 23S rRNA in the assembled 50S subunit and ribosome. Functionally, the globular domain of the protein is located near the polypeptide exit tunnel on the outside of the subunit, while an extended beta-hairpin is found that lines the wall of the exit tunnel in the center of the 70S ribosome. The chain is Large ribosomal subunit protein uL22 from Mycoplasma mycoides subsp. mycoides SC (strain CCUG 32753 / NCTC 10114 / PG1).